The chain runs to 148 residues: Large ribosomal subunit protein bL9 (148 aa).

The protein belongs to the bacterial ribosomal protein bL9 family.

Functionally, binds to the 23S rRNA. In Campylobacter concisus (strain 13826), this protein is Large ribosomal subunit protein bL9.